A 176-amino-acid polypeptide reads, in one-letter code: Large ribosomal subunit protein uL6 (176 aa).

It belongs to the universal ribosomal protein uL6 family. Part of the 50S ribosomal subunit.

This protein binds to the 23S rRNA, and is important in its secondary structure. It is located near the subunit interface in the base of the L7/L12 stalk, and near the tRNA binding site of the peptidyltransferase center. The protein is Large ribosomal subunit protein uL6 of Burkholderia vietnamiensis (strain G4 / LMG 22486) (Burkholderia cepacia (strain R1808)).